Consider the following 397-residue polypeptide: Metallophosphoesterase 1 (397 aa).

Residues 27–47 (IAVVFAVLLFCEFLIYYLAIF) traverse the membrane as a helical segment. 6 residues coordinate a divalent metal cation: Asp-77, Asp-119, Asn-157, His-250, His-304, and His-306. The chain crosses the membrane as a helical span at residues 357-377 (VVLIIYCGMVGFLVVLTLTHF). A Di-lysine motif motif is present at residues 393–397 (KRKTR).

Belongs to the metallophosphoesterase superfamily. MPPE1 family. Interacts with GPI-anchor proteins (via the GPI portion). Interacts with TMED10. It depends on Mn(2+) as a cofactor.

It localises to the endoplasmic reticulum-Golgi intermediate compartment membrane. Its function is as follows. Metallophosphoesterase that catalyzes the removal of a side-chain ethanolamine-phosphate (EtNP) from the second mannose of the GPI-anchor protein intermediate. Participates in the glycan remodeling steps of GPI-anchor maturation to allow an efficient transport of GPI-anchor proteins from the endoplasmic reticulum to the Golgi. This Pongo abelii (Sumatran orangutan) protein is Metallophosphoesterase 1.